Reading from the N-terminus, the 260-residue chain is Small ribosomal subunit protein eS1 (260 aa).

Basic residues predominate over residues 1 to 18; sequence MAVGKNKRISKGKKGGKK. Residues 1–22 form a disordered region; sequence MAVGKNKRISKGKKGGKKKAAD.

It belongs to the eukaryotic ribosomal protein eS1 family. Component of the small ribosomal subunit. Mature ribosomes consist of a small (40S) and a large (60S) subunit. The 40S subunit contains about 33 different proteins and 1 molecule of RNA (18S). The 60S subunit contains about 49 different proteins and 3 molecules of RNA (25S, 5.8S and 5S).

The protein localises to the cytoplasm. In Helianthus annuus (Common sunflower), this protein is Small ribosomal subunit protein eS1.